The sequence spans 310 residues: tRNA-cytidine(32) 2-sulfurtransferase (310 aa).

A PP-loop motif motif is present at residues 45–50; sequence SGGKDS. Positions 120, 123, and 211 each coordinate [4Fe-4S] cluster.

The protein belongs to the TtcA family. As to quaternary structure, homodimer. Mg(2+) is required as a cofactor. Requires [4Fe-4S] cluster as cofactor.

The protein resides in the cytoplasm. It catalyses the reaction cytidine(32) in tRNA + S-sulfanyl-L-cysteinyl-[cysteine desulfurase] + AH2 + ATP = 2-thiocytidine(32) in tRNA + L-cysteinyl-[cysteine desulfurase] + A + AMP + diphosphate + H(+). It functions in the pathway tRNA modification. In terms of biological role, catalyzes the ATP-dependent 2-thiolation of cytidine in position 32 of tRNA, to form 2-thiocytidine (s(2)C32). The sulfur atoms are provided by the cysteine/cysteine desulfurase (IscS) system. The protein is tRNA-cytidine(32) 2-sulfurtransferase of Shewanella sp. (strain ANA-3).